The chain runs to 724 residues: Pediocin PA-1 transport/processing ATP-binding protein PedD (724 aa).

Residues 13–140 form the Peptidase C39 domain; sequence QVDENDCGLA…KEWTQIAIII (128 aa). Residue Cys19 is part of the active site. 6 helical membrane passes run 170–190, 207–227, 284–304, 307–327, 396–416, and 426–446; these read IGLI…GAYF, LSLV…INYI, TTLT…FLAY, INLF…VWLF, IKAA…TFFV, and LLTY…IINL. An ABC transmembrane type-1 domain is found at 170-452; the sequence is IGLIITAAAI…IINLQPKLQA (283 aa). The ABC transporter domain maps to 486–722; sequence IEVNHVSFNY…NGYYARLIHN (237 aa). 519–526 provides a ligand contact to ATP; it reads GMSGSGKT.

It belongs to the ABC transporter superfamily. Pediocin PA-1 exporter (TC 3.A.1.112.2) family.

The protein localises to the cell membrane. Involved in the export process of the bacteriocin pediocin PA-1/AcH. Is also essential for pediocin production. This Pediococcus acidilactici protein is Pediocin PA-1 transport/processing ATP-binding protein PedD (pedD).